Reading from the N-terminus, the 396-residue chain is S-adenosylmethionine synthase 1 (396 aa).

Glu-12 is a binding site for Mg(2+). Position 18 (His-18) interacts with ATP. K(+) is bound at residue Glu-46. Positions 59 and 102 each coordinate L-methionine. Residues 170–172, 238–241, Asp-249, 255–256, Ala-272, Lys-276, and Lys-280 each bind ATP; these read DGK, SGRF, and RK. Asp-249 is an L-methionine binding site. Lys-280 contacts L-methionine.

Belongs to the AdoMet synthase family. In terms of assembly, homotetramer. Mn(2+) is required as a cofactor. Requires Mg(2+) as cofactor. It depends on Co(2+) as a cofactor. K(+) serves as cofactor.

It is found in the cytoplasm. The enzyme catalyses L-methionine + ATP + H2O = S-adenosyl-L-methionine + phosphate + diphosphate. The protein operates within amino-acid biosynthesis; S-adenosyl-L-methionine biosynthesis; S-adenosyl-L-methionine from L-methionine: step 1/1. Functionally, catalyzes the formation of S-adenosylmethionine from methionine and ATP. The reaction comprises two steps that are both catalyzed by the same enzyme: formation of S-adenosylmethionine (AdoMet) and triphosphate, and subsequent hydrolysis of the triphosphate. The chain is S-adenosylmethionine synthase 1 (SAM1) from Oryza sativa subsp. japonica (Rice).